The primary structure comprises 436 residues: Acetyl-CoA decarbonylase/synthase complex subunit delta 1 (436 aa).

This sequence belongs to the CdhD family. Heterodimer of delta and gamma chains. The ACDS complex is made up of alpha, epsilon, beta, gamma and delta chains with a probable stoichiometry of (alpha(2)epsilon(2))(4)-beta(8)-(gamma(1)delta(1))(8) (Potential).

It participates in one-carbon metabolism; methanogenesis from acetate. Functionally, part of a complex that catalyzes the reversible cleavage of acetyl-CoA, allowing growth on acetate as sole source of carbon and energy. Probably maintains the overall quaternary structure of the ACDS complex. The polypeptide is Acetyl-CoA decarbonylase/synthase complex subunit delta 1 (cdhD1) (Methanosarcina thermophila).